An 834-amino-acid chain; its full sequence is Probable receptor-like protein kinase At2g23200 (834 aa).

The signal sequence occupies residues 1–28; it reads MENFCFQDSVSLFITIMVLVLLPRLSLS. Residues 29-405 lie on the Extracellular side of the membrane; the sequence is DTSTYTRPEN…SSSRVHIITG (377 aa). Residues N61, N149, N221, N246, N277, N289, N314, N352, N361, and N394 are each glycosylated (N-linked (GlcNAc...) asparagine). The chain crosses the membrane as a helical span at residues 406 to 426; that stretch reads CAVAAAAASALVFSLLFMVFL. Over 427–834 the chain is Cytoplasmic; the sequence is KRRRSKKTKP…FSQLKISDAR (408 aa). The region spanning 488–761 is the Protein kinase domain; it reads FDEQLLIGKG…RDVIWDLEYV (274 aa). ATP-binding positions include 494–502 and K516; that span reads IGKGGFGYV. D613 acts as the Proton acceptor in catalysis.

This sequence belongs to the protein kinase superfamily. Ser/Thr protein kinase family.

The protein resides in the membrane. This Arabidopsis thaliana (Mouse-ear cress) protein is Probable receptor-like protein kinase At2g23200.